The sequence spans 257 residues: Type III pantothenate kinase (257 aa).

Residue 5-12 participates in ATP binding; sequence DIGNTNIK. 107-110 contacts substrate; it reads GSDR. D109 functions as the Proton acceptor in the catalytic mechanism. T133 is an ATP binding site.

It belongs to the type III pantothenate kinase family. Homodimer. Requires NH4(+) as cofactor. It depends on K(+) as a cofactor.

It localises to the cytoplasm. The catalysed reaction is (R)-pantothenate + ATP = (R)-4'-phosphopantothenate + ADP + H(+). It functions in the pathway cofactor biosynthesis; coenzyme A biosynthesis; CoA from (R)-pantothenate: step 1/5. In terms of biological role, catalyzes the phosphorylation of pantothenate (Pan), the first step in CoA biosynthesis. This is Type III pantothenate kinase from Ehrlichia ruminantium (strain Gardel).